A 70-amino-acid chain; its full sequence is Bowman-Birk type proteinase inhibitor A7 (70 aa).

4 cysteine pairs are disulfide-bonded: cysteine 12-cysteine 31, cysteine 18-cysteine 29, cysteine 38-cysteine 45, and cysteine 42-cysteine 59.

This sequence belongs to the Bowman-Birk serine protease inhibitor family. As to expression, expressed in bulb (at protein level).

Functionally, serine protease inhibitor. Strongly inhibits trypsin (Ki = 7.1 nM) and almost completely inhibits elastase. Also inhibits chymotrypsin (Ki = 19 nM). Does not inhibit bacterial subtilisin. The protein is Bowman-Birk type proteinase inhibitor A7 of Hyacinthus orientalis (Common hyacinth).